Consider the following 341-residue polypeptide: Holliday junction branch migration complex subunit RuvB (341 aa).

The large ATPase domain (RuvB-L) stretch occupies residues 1–182 (MTERFVTPDF…FGVICRLEFY (182 aa)). Residues leucine 21, arginine 22, glycine 63, lysine 66, threonine 67, threonine 68, 129-131 (EDY), arginine 172, tyrosine 182, and arginine 219 each bind ATP. Threonine 67 contacts Mg(2+). A small ATPAse domain (RuvB-S) region spans residues 183 to 253 (TDDELATIAG…IADMALSRLE (71 aa)). The head domain (RuvB-H) stretch occupies residues 256-341 (NCGLDHMDRL…RGKTSGELFS (86 aa)). The DNA site is built by arginine 311 and arginine 316.

The protein belongs to the RuvB family. Homohexamer. Forms an RuvA(8)-RuvB(12)-Holliday junction (HJ) complex. HJ DNA is sandwiched between 2 RuvA tetramers; dsDNA enters through RuvA and exits via RuvB. An RuvB hexamer assembles on each DNA strand where it exits the tetramer. Each RuvB hexamer is contacted by two RuvA subunits (via domain III) on 2 adjacent RuvB subunits; this complex drives branch migration. In the full resolvosome a probable DNA-RuvA(4)-RuvB(12)-RuvC(2) complex forms which resolves the HJ.

Its subcellular location is the cytoplasm. The enzyme catalyses ATP + H2O = ADP + phosphate + H(+). In terms of biological role, the RuvA-RuvB-RuvC complex processes Holliday junction (HJ) DNA during genetic recombination and DNA repair, while the RuvA-RuvB complex plays an important role in the rescue of blocked DNA replication forks via replication fork reversal (RFR). RuvA specifically binds to HJ cruciform DNA, conferring on it an open structure. The RuvB hexamer acts as an ATP-dependent pump, pulling dsDNA into and through the RuvAB complex. RuvB forms 2 homohexamers on either side of HJ DNA bound by 1 or 2 RuvA tetramers; 4 subunits per hexamer contact DNA at a time. Coordinated motions by a converter formed by DNA-disengaged RuvB subunits stimulates ATP hydrolysis and nucleotide exchange. Immobilization of the converter enables RuvB to convert the ATP-contained energy into a lever motion, pulling 2 nucleotides of DNA out of the RuvA tetramer per ATP hydrolyzed, thus driving DNA branch migration. The RuvB motors rotate together with the DNA substrate, which together with the progressing nucleotide cycle form the mechanistic basis for DNA recombination by continuous HJ branch migration. Branch migration allows RuvC to scan DNA until it finds its consensus sequence, where it cleaves and resolves cruciform DNA. This is Holliday junction branch migration complex subunit RuvB from Syntrophotalea carbinolica (strain DSM 2380 / NBRC 103641 / GraBd1) (Pelobacter carbinolicus).